We begin with the raw amino-acid sequence, 251 residues long: Small ribosomal subunit protein uS2 (251 aa).

This sequence belongs to the universal ribosomal protein uS2 family.

The chain is Small ribosomal subunit protein uS2 from Azoarcus sp. (strain BH72).